Consider the following 92-residue polypeptide: CRISPR-associated endoribonuclease Cas2 1 (92 aa).

Asp10 serves as a coordination point for Mg(2+).

It belongs to the CRISPR-associated endoribonuclease Cas2 protein family. Homodimer, forms a heterotetramer with a Cas1 homodimer. It depends on Mg(2+) as a cofactor.

Functionally, CRISPR (clustered regularly interspaced short palindromic repeat), is an adaptive immune system that provides protection against mobile genetic elements (viruses, transposable elements and conjugative plasmids). CRISPR clusters contain sequences complementary to antecedent mobile elements and target invading nucleic acids. CRISPR clusters are transcribed and processed into CRISPR RNA (crRNA). Functions as a ssRNA-specific endoribonuclease. Involved in the integration of spacer DNA into the CRISPR cassette. This chain is CRISPR-associated endoribonuclease Cas2 1, found in Thermodesulfovibrio yellowstonii (strain ATCC 51303 / DSM 11347 / YP87).